Reading from the N-terminus, the 433-residue chain is Enolase (433 aa).

A (2R)-2-phosphoglycerate-binding site is contributed by Gln167. The active-site Proton donor is Glu209. Mg(2+) contacts are provided by Asp246, Glu291, and Asp318. The (2R)-2-phosphoglycerate site is built by Lys343, Arg372, Ser373, and Lys394. The active-site Proton acceptor is the Lys343.

Belongs to the enolase family. As to quaternary structure, component of the RNA degradosome, a multiprotein complex involved in RNA processing and mRNA degradation. It depends on Mg(2+) as a cofactor.

The protein resides in the cytoplasm. Its subcellular location is the secreted. The protein localises to the cell surface. It carries out the reaction (2R)-2-phosphoglycerate = phosphoenolpyruvate + H2O. It functions in the pathway carbohydrate degradation; glycolysis; pyruvate from D-glyceraldehyde 3-phosphate: step 4/5. In terms of biological role, catalyzes the reversible conversion of 2-phosphoglycerate (2-PG) into phosphoenolpyruvate (PEP). It is essential for the degradation of carbohydrates via glycolysis. In Photorhabdus laumondii subsp. laumondii (strain DSM 15139 / CIP 105565 / TT01) (Photorhabdus luminescens subsp. laumondii), this protein is Enolase.